The chain runs to 1012 residues: Beta-alanine-activating enzyme (1012 aa).

ATP contacts are provided by residues 177–185 (TTGTTGKPK), Asp-411, Arg-426, and Lys-516.

It belongs to the ATP-dependent AMP-binding enzyme family.

Its function is as follows. Covalently binds beta-alanine in an ATP-dependent manner to form a thioester bond with its phosphopantetheine group and transfers it to an, as yet, unknown acceptor. May be required for a post-translational protein modification or for post-transcriptional modification of an RNA. The sequence is that of Beta-alanine-activating enzyme from Drosophila melanogaster (Fruit fly).